A 983-amino-acid chain; its full sequence is MTSRMQPKSGVYSVSKADFTKIFEDVPKVPITSAVDLRNKFDAVRIILSNSSEDWNKRQTQLKTVRSLVIHGEKVVDRPTMIAHLVQLLGCFELAVKDLRSQVLREAAITCSFIVSKYGIETHSIGEDILVPAMSQVAVSTKIMATSASTLTEFIVEYVQTRQVFTILSSFSTSKDKSQRRQLAALLEIVISKWSDRIKKQIMRQICELIKSAINDADSETRAAGRRAFAKLDEMHSEEADALYLELDHSKQKMLRGGDAASSWASVNSEKGSIPIRSKLSAGSKAHMNISAKFLAQRSASAIDPKATKFAGPSRLVRPTSTKTMARQDTSPAGCKYSNFISMFFKTLLLSAKIPYPNRPGSRTRTSSITSTDSRDTSPTRRNSPLPPETQKARVKYGNGSFFAKLGMPDTTDDDEFLLPIRIRSPLKTPTIEAHDKVSQVLKECCSSSVSEKKEGIKKLLPIVADTSLNPIEIKNIGNCLNRLLSDASNTMVLEIYSIFVRTHSSRLSEWLRLALAKLFARKAAETLPNTKKQIGHTLNVILECFNAHHQLVTVCELMCDPIHLMVPKARVVLLEYLTSLLDEYTEPGASINAKELKTAIRKMLTWASDPRLSILLTPHVEKAICSMFCVNVADFSALISDLDSEQKNWIHQTLQRNGLENGISSNNIATNSGATASRETSNTSFQKESTSFGLPEFGARKGGTGVNLGSLNISNNLALSRLEEQSTSRLMEKVNLNSTVTLPPDTLEKIQNVQDLLQKMRSSENADEQESAISSIYMMICDGGFGVWEQCYAKLLLNLFEILSKSRSENNKKMCLRILGKMCTAQAAKLFDSTEMAVCKVLDAAVNTNDATTALAVEDCLRTLATHLPLSNIINIAKVILNQEPIDDERASLVLKMVTRLFEELPAEELNNIVDDITPTIIKAYQSTSSTVRKTVVYCLVAMVNRVGEQRMTPHFTKLPKAMTNLIQVYVNRAISTSLPRL.

2 disordered regions span residues 356-393 (YPNRPGSRTRTSSITSTDSRDTSPTRRNSPLPPETQKA) and 666-690 (SNNIATNSGATASRETSNTSFQKES). Positions 359–372 (RPGSRTRTSSITST) are enriched in low complexity. Residues 918 to 956 (ITPTIIKAYQSTSSTVRKTVVYCLVAMVNRVGEQRMTPH) form an HEAT repeat.

It belongs to the CLASP family.

Its subcellular location is the cytoplasm. The protein localises to the cytoskeleton. Microtubule plus-end tracking protein that promotes the stabilization of dynamic microtubules. This is Protein CLASP-3 (cls-3) from Caenorhabditis elegans.